A 429-amino-acid polypeptide reads, in one-letter code: Phosphoribosylamine--glycine ligase (429 aa).

In terms of domain architecture, ATP-grasp spans 109–316 (KDFLARHNIP…LVELCQAAIA (208 aa)). 135–196 (VREKGAPIVV…EEFLDGEEAS (62 aa)) contributes to the ATP binding site. Residues E286 and N288 each contribute to the Mg(2+) site.

The protein belongs to the GARS family. Requires Mg(2+) as cofactor. The cofactor is Mn(2+).

The catalysed reaction is 5-phospho-beta-D-ribosylamine + glycine + ATP = N(1)-(5-phospho-beta-D-ribosyl)glycinamide + ADP + phosphate + H(+). It participates in purine metabolism; IMP biosynthesis via de novo pathway; N(1)-(5-phospho-D-ribosyl)glycinamide from 5-phospho-alpha-D-ribose 1-diphosphate: step 2/2. The chain is Phosphoribosylamine--glycine ligase from Vibrio cholerae serotype O1 (strain ATCC 39315 / El Tor Inaba N16961).